Here is a 193-residue protein sequence, read N- to C-terminus: Probable nicotinate-nucleotide adenylyltransferase (193 aa).

The protein belongs to the NadD family.

It carries out the reaction nicotinate beta-D-ribonucleotide + ATP + H(+) = deamido-NAD(+) + diphosphate. It participates in cofactor biosynthesis; NAD(+) biosynthesis; deamido-NAD(+) from nicotinate D-ribonucleotide: step 1/1. Functionally, catalyzes the reversible adenylation of nicotinate mononucleotide (NaMN) to nicotinic acid adenine dinucleotide (NaAD). The protein is Probable nicotinate-nucleotide adenylyltransferase of Borreliella afzelii (strain PKo) (Borrelia afzelii).